The chain runs to 293 residues: NAD-dependent protein deacetylase (293 aa).

Positions 1–284 (MTVAITQTGP…QPPDPLHTAT (284 aa)) constitute a Deacetylase sirtuin-type domain. NAD(+)-binding positions include 27 to 47 (GAGC…GGWK) and 105 to 108 (QNVD). The active-site Proton acceptor is the His-123. Cys-131, Cys-134, Cys-182, and Cys-185 together coordinate Zn(2+). NAD(+) contacts are provided by residues 222–224 (GSS), 248–250 (NFG), and Cys-266.

The protein belongs to the sirtuin family. Class II subfamily. Requires Zn(2+) as cofactor.

It localises to the cytoplasm. The enzyme catalyses N(6)-acetyl-L-lysyl-[protein] + NAD(+) + H2O = 2''-O-acetyl-ADP-D-ribose + nicotinamide + L-lysyl-[protein]. In terms of biological role, NAD-dependent protein deacetylase which modulates the activities of several enzymes which are inactive in their acetylated form. In Xanthomonas campestris pv. campestris (strain B100), this protein is NAD-dependent protein deacetylase.